The chain runs to 186 residues: TATA-box-binding protein B (186 aa).

A run of 2 repeats spans residues 10–86 (IENV…FGDI) and 101–179 (VQNI…QDRL).

Belongs to the TBP family.

Functionally, general factor that plays a role in the activation of archaeal genes transcribed by RNA polymerase. Binds specifically to the TATA box promoter element which lies close to the position of transcription initiation. The protein is TATA-box-binding protein B (tbpB1) of Halobacterium salinarum (strain ATCC 700922 / JCM 11081 / NRC-1) (Halobacterium halobium).